The chain runs to 762 residues: MSAHQVDTVTHASADPDAAQPFKELGLKDDEYARIKEILGRRPTDAELAMYSVMWSEHCSYKSSKVHLGYFGKTTTDEMRANMLAGIGENAGVVDIGDGWAVTFKVESHNHPSYVEPYQGAATGVGGIVRDIMAMGARPIAVMDQLRFGAADAPDTRRVVDGVVRGVGGYGNSLGLPNIGGETVFDESYAGNPLVNALAAGVMRVEDLHLAFASGAGNKIILFGARTGLDGIGGVSVLASATFDDEGGDTGGRKKLPAVQVGDPFTEKVLIECCLDLYKAGLVVGIQDLGGAGLSCATSELAAAGDGGMHINLEKVPMRATGMTPAEVLSSESQERMCAVVTPENVDAFMEVCKKWDVLATDIGEVTDGEHLTISWHGETVVDVPPRTVAHEGPVYNRPVERPASQDALIANTTAGLKRPETDAELEATLLKMIASPALCSRKWITEQYDRYVRGNTVLAENADGGVIRIDEKTGRGIALSTDASGRYTALDPYTGAQLALAEAFRNVAVTGATPKAVSNCLNFGSPEDPGVMWQFQQAVRGLADGCATLGIPVTGGNVSFYNQTGSTAILPTPVVAVLGVIDDVHRRIPTGLGLEPGETLILLGDTHDEFDGSIWSQVEHGHLGGVPPKVDLAREQLLADILLASSRDGLVTAAHDLSEGGLAQAVVEAALAGETGCRILIPEGADPFVTLFSESSGRVLVAVPRTEETRFTGMCTARGLPWTRIGVVDEGSDSVEVQGHFSVTMAKLREAFEGTLPALFG.

Histidine 58 is a catalytic residue. ATP contacts are provided by tyrosine 61 and lysine 105. Residue glutamate 107 participates in Mg(2+) binding. Residues 108–111 and arginine 130 contribute to the substrate site; that span reads SHNH. Histidine 109 serves as the catalytic Proton acceptor. Aspartate 131 contributes to the Mg(2+) binding site. A substrate-binding site is contributed by glutamine 260. Aspartate 288 is a binding site for Mg(2+). Position 332–334 (332–334) interacts with substrate; sequence ESQ. Positions 520 and 557 each coordinate ATP. Residue asparagine 558 participates in Mg(2+) binding. Serine 560 provides a ligand contact to substrate.

It belongs to the FGAMS family. In terms of assembly, monomer. Part of the FGAM synthase complex composed of 1 PurL, 1 PurQ and 2 PurS subunits.

The protein resides in the cytoplasm. It catalyses the reaction N(2)-formyl-N(1)-(5-phospho-beta-D-ribosyl)glycinamide + L-glutamine + ATP + H2O = 2-formamido-N(1)-(5-O-phospho-beta-D-ribosyl)acetamidine + L-glutamate + ADP + phosphate + H(+). It functions in the pathway purine metabolism; IMP biosynthesis via de novo pathway; 5-amino-1-(5-phospho-D-ribosyl)imidazole from N(2)-formyl-N(1)-(5-phospho-D-ribosyl)glycinamide: step 1/2. Its function is as follows. Part of the phosphoribosylformylglycinamidine synthase complex involved in the purines biosynthetic pathway. Catalyzes the ATP-dependent conversion of formylglycinamide ribonucleotide (FGAR) and glutamine to yield formylglycinamidine ribonucleotide (FGAM) and glutamate. The FGAM synthase complex is composed of three subunits. PurQ produces an ammonia molecule by converting glutamine to glutamate. PurL transfers the ammonia molecule to FGAR to form FGAM in an ATP-dependent manner. PurS interacts with PurQ and PurL and is thought to assist in the transfer of the ammonia molecule from PurQ to PurL. This Rhodococcus erythropolis (strain PR4 / NBRC 100887) protein is Phosphoribosylformylglycinamidine synthase subunit PurL.